Consider the following 422-residue polypeptide: Signal recognition particle receptor FtsY (422 aa).

Residues Pro39 to Arg86 form a disordered region. The span at Tyr50 to Pro66 shows a compositional bias: polar residues. GTP-binding positions include Gly230–Thr237, Asp312–Arg316, and Thr374–Asp377.

It belongs to the GTP-binding SRP family. FtsY subfamily. In terms of assembly, part of the signal recognition particle protein translocation system, which is composed of SRP and FtsY.

It is found in the cell membrane. The protein resides in the cytoplasm. It catalyses the reaction GTP + H2O = GDP + phosphate + H(+). In terms of biological role, involved in targeting and insertion of nascent membrane proteins into the cytoplasmic membrane. Acts as a receptor for the complex formed by the signal recognition particle (SRP) and the ribosome-nascent chain (RNC). The chain is Signal recognition particle receptor FtsY from Mycobacterium bovis (strain ATCC BAA-935 / AF2122/97).